A 108-amino-acid chain; its full sequence is Nucleoid-associated protein Bcen_6253 (108 aa).

The segment covering 85 to 95 (ATSQEKMSGMT) has biased composition (polar residues). Positions 85–108 (ATSQEKMSGMTSGLPLPPGFKLPF) are disordered. Pro residues predominate over residues 99–108 (PLPPGFKLPF).

The protein belongs to the YbaB/EbfC family. In terms of assembly, homodimer.

The protein localises to the cytoplasm. It is found in the nucleoid. Functionally, binds to DNA and alters its conformation. May be involved in regulation of gene expression, nucleoid organization and DNA protection. In Burkholderia orbicola (strain AU 1054), this protein is Nucleoid-associated protein Bcen_6253.